A 334-amino-acid chain; its full sequence is Glycerol-3-phosphate dehydrogenase [NAD(P)+] 2 (334 aa).

The NADPH site is built by tryptophan 16, arginine 36, arginine 37, and lysine 110. The sn-glycerol 3-phosphate site is built by lysine 110 and glycine 140. Alanine 144 serves as a coordination point for NADPH. Residues lysine 195, aspartate 248, serine 258, arginine 259, and asparagine 260 each coordinate sn-glycerol 3-phosphate. Lysine 195 functions as the Proton acceptor in the catalytic mechanism. NADPH is bound at residue arginine 259. NADPH-binding residues include valine 282 and glutamate 284.

The protein belongs to the NAD-dependent glycerol-3-phosphate dehydrogenase family.

It localises to the cytoplasm. It catalyses the reaction sn-glycerol 3-phosphate + NAD(+) = dihydroxyacetone phosphate + NADH + H(+). The enzyme catalyses sn-glycerol 3-phosphate + NADP(+) = dihydroxyacetone phosphate + NADPH + H(+). The protein operates within membrane lipid metabolism; glycerophospholipid metabolism. Functionally, catalyzes the reduction of the glycolytic intermediate dihydroxyacetone phosphate (DHAP) to sn-glycerol 3-phosphate (G3P), the key precursor for phospholipid synthesis. The polypeptide is Glycerol-3-phosphate dehydrogenase [NAD(P)+] 2 (Mycobacterium bovis (strain ATCC BAA-935 / AF2122/97)).